The primary structure comprises 147 residues: Calcium-regulated heat-stable protein 1 (147 aa).

Residues 1-12 show a composition bias toward pro residues; it reads MSSEPPPPPQPP. A disordered region spans residues 1–52; it reads MSSEPPPPPQPPTHQASVGLLDTPRSRERSPSPLRGNVVPSPLPTRRTRTFS. Serine 2 bears the N-acetylserine mark. Residues serine 30, serine 32, and serine 41 each carry the phosphoserine modification. Threonine 45 carries the phosphothreonine modification. Phosphoserine occurs at positions 52 and 58. The 68-residue stretch at 62-129 folds into the CSD domain; that stretch reads VYKGVCKCFC…KLQAVEVVIT (68 aa). Phosphoserine occurs at positions 146 and 147.

As to quaternary structure, homodimer. Interacts with STYX. Post-translationally, dephosphorylated by calcineurin in a Ca(2+) dependent manner. Can be phosphorylated by DYRK2 (in vitro).

It localises to the cytoplasm. The protein localises to the P-body. The protein resides in the cytoplasmic granule. Its function is as follows. Binds mRNA and regulates the stability of target mRNA. Binds single-stranded DNA (in vitro). The sequence is that of Calcium-regulated heat-stable protein 1 (CARHSP1) from Homo sapiens (Human).